The sequence spans 1472 residues: Adhesion G protein-coupled receptor L1 (1472 aa).

Positions 1-24 (MARLAAVLWSLCVTAILVTSATQG) are cleaved as a signal peptide. Topologically, residues 25 to 857 (LSRAGLPFGL…EIYQGRINEL (833 aa)) are extracellular. Residues 40–129 (ACEGYPIELR…KYLEVQYDCV (90 aa)) form the SUEL-type lectin domain. 5 disulfide bridges follow: C41–C71, C50–C128, C83–C115, C96–C102, and C140–C322. E42 serves as a coordination point for alpha-L-rhamnose. The N-linked (GlcNAc...) asparagine glycan is linked to N98. Position 117-120 (117-120 (GTYK)) interacts with alpha-L-rhamnose. One can recognise an Olfactomedin-like domain in the interval 139-398 (VCPGTLQKVL…VVRYSLEFGP (260 aa)). A disordered region spans residues 400-468 (DPSAGPATSP…APAPSTRRPP (69 aa)). Residues 405–441 (PATSPPLSTTTTARPTPLTSTASPAATTPLRRAPLTT) are compositionally biased toward low complexity. The span at 453 to 468 (DLPPATAPAPSTRRPP) shows a compositional bias: pro residues. 2 cysteine pairs are disulfide-bonded: C480-C515 and C503-C532. Residues N531, N640, N741, N800, N805, and N826 are each glycosylated (N-linked (GlcNAc...) asparagine). In terms of domain architecture, GAIN-B spans 669 to 850 (PARFLAAKQN…AVLMAHREIY (182 aa)). Intrachain disulfides connect C801-C832 and C820-C834. The GPS stretch occupies residues 801 to 850 (CSFWNYSERSMLGYWSTQGCRLVESNKTHTTCACSHLTNFAVLMAHREIY). The helical transmembrane segment at 858–878 (LLSVITWVGIVISLVCLAICI) threads the bilayer. Residues 879–892 (STFCFLRGLQTDRN) are Cytoplasmic-facing. A helical transmembrane segment spans residues 893-913 (TIHKNLCINLFLAELLFLVGI). Topologically, residues 914–919 (DKTQYE) are extracellular. A helical transmembrane segment spans residues 920 to 940 (IACPIFAGLLHYFFLAAFSWL). Residues 941 to 963 (CLEGVHLYLLLVEVFESEYSRTK) lie on the Cytoplasmic side of the membrane. Residues 964–984 (YYYLGGYCFPALVVGIAAAID) form a helical membrane-spanning segment. At 985–1001 (YRSYGTEKACWLRVDNY) the chain is on the extracellular side. Residues 1002 to 1022 (FIWSFIGPVSFVIVVNLVFLM) traverse the membrane as a helical segment. Topologically, residues 1023 to 1049 (VTLHKMVRSSSVLKPDSSRLDNIKSWA) are cytoplasmic. A helical transmembrane segment spans residues 1050 to 1070 (LGAIALLFLLGLTWAFGLLFI). Residues 1071–1074 (NKES) are Extracellular-facing. Residues 1075-1095 (VVMAYLFTTFNAFQGVFIFVF) traverse the membrane as a helical segment. At 1096 to 1472 (HCALQKKVHK…DGQMQLVTSL (377 aa)) the chain is on the cytoplasmic side. R1193 bears the Omega-N-methylarginine mark. Phosphoserine is present on S1219. 4 disordered regions span residues 1247–1271 (FNNS…PRGR), 1291–1325 (NLRG…GGPG), 1358–1427 (ESES…SRPP), and 1449–1472 (YLAA…VTSL). Pro residues-rich tracts occupy residues 1301-1313 (GPPP…PPVP) and 1406-1418 (ALPP…PGPP). S1471 is modified (phosphoserine).

Belongs to the G-protein coupled receptor 2 family. Adhesion G-protein coupled receptor (ADGR) subfamily. In terms of assembly, forms a heterodimer, consisting of a large extracellular region (p120) non-covalently linked to a seven-transmembrane moiety (p85). Interacts with syntaxin and with proteins of the SHANK family via the PDZ domain. Interacts (via extracellular domain) with FLRT1, FLRT2 and FLRT3 (via extracellular domain). Post-translationally, autoproteolytically cleaved into 2 subunits, an extracellular subunit and a seven-transmembrane subunit. This proteolytic processing takes place early in the biosynthetic pathway, either in the endoplasmic reticulum or in the early compartment of the Golgi apparatus. In terms of tissue distribution, brain-specific expression but low levels are also detected in kidney, lung and spleen.

It localises to the cell membrane. Its subcellular location is the cell projection. The protein localises to the axon. It is found in the growth cone. The protein resides in the synapse. It localises to the presynaptic cell membrane. Its subcellular location is the synaptosome. Its function is as follows. Calcium-independent receptor of high affinity for alpha-latrotoxin, an excitatory neurotoxin present in black widow spider venom which triggers massive exocytosis from neurons and neuroendocrine cells. Receptor for TENM2 that mediates heterophilic synaptic cell-cell contact and postsynaptic specialization. Receptor probably implicated in the regulation of exocytosis. The polypeptide is Adhesion G protein-coupled receptor L1 (Bos taurus (Bovine)).